Here is a 611-residue protein sequence, read N- to C-terminus: MAGLVPVPVSSAAATTSAPLAPVVLPKTSESEQLLKIRHSMSHVMAMAVQKLFPNAQVTIGPWTETGFYYDFDNPEPFTEDDLKAIKKEMGKIIGRKLPLERIEVSRDEAETRIKAQNEPYKLEILERLQEPITLYTLGDQWWDLCAGPHVENTKELHPKAFELESVAGAYWRGDETKAQLQRIYGTAWETPEQLAEHKRRKVEALRRDHRRLGKDLELFSIEDEAGAGLVFWHPRGARMRLLIEDFWRQAHFEGGYELLYTPHVADISLWKTSGHLDFYAESMFGPMQVDEREYQLKPMNCPFHVLTYASKLRSYRELPIRWAELGTVYRYERPGVMHGLMRVRGFTQDDAHVFCLPDQISDEILRILDLTERILSTFDFNHYEINLSTRPEKSIGSEAVWELATKGLTEALERKGWNFKIDEGGGAFYGPKIDLKIEDAIGRMWQCSTIQLDFNLPERFGLDYVAADGSKQQPIMIHRAIFGSLERFFGIMTENYAGDFPFWLAPEQIRLLPVTDDVQPYAEQVLNQLKTAGIRATIDQSGDRLGKIIRTGEQMKIPVLAVIGAKEAEQNAISLRSRRDGDLGVTSVDALLKAAQRANAERQPGLGLNP.

Positions D209–P502 are catalytic. Positions 302, 353, and 479 each coordinate Zn(2+).

It belongs to the class-II aminoacyl-tRNA synthetase family. Homodimer. The cofactor is Zn(2+).

The protein localises to the cytoplasm. The catalysed reaction is tRNA(Thr) + L-threonine + ATP = L-threonyl-tRNA(Thr) + AMP + diphosphate + H(+). Its function is as follows. Catalyzes the attachment of threonine to tRNA(Thr) in a two-step reaction: L-threonine is first activated by ATP to form Thr-AMP and then transferred to the acceptor end of tRNA(Thr). Also edits incorrectly charged L-seryl-tRNA(Thr). This Synechococcus sp. (strain CC9902) protein is Threonine--tRNA ligase.